We begin with the raw amino-acid sequence, 20 residues long: Pregnancy-associated glycoprotein 75 (20 aa).

Belongs to the peptidase A1 family. N-glycosylated. In terms of tissue distribution, expressed in chorionic epithelium (trophectoderm).

It is found in the secreted. The chain is Pregnancy-associated glycoprotein 75 from Bubalus bubalis (Domestic water buffalo).